Here is a 103-residue protein sequence, read N- to C-terminus: Astacin-like peptidase p16 (103 aa).

One can recognise a Peptidase M12A domain in the interval asparagine 1 to methionine 103.

It depends on Zn(2+) as a cofactor.

Its function is as follows. Active against casein. Has a role as a digestive enzyme. This Argiope aurantia (Black-and-yellow garden spider) protein is Astacin-like peptidase p16.